A 479-amino-acid polypeptide reads, in one-letter code: ESX-1 secretion system ATPase EccB1 (479 aa).

Residues Met1–Ala44 lie on the Cytoplasmic side of the membrane. A helical membrane pass occupies residues Val45–Phe65. Over Lys66–Gly479 the chain is Periplasmic. The cysteines at positions 152 and 347 are disulfide-linked.

The protein belongs to the EccB family. As to quaternary structure, part of the ESX-1 / type VII secretion system (T7SS), which is composed of cytosolic and membrane components. The ESX-1 membrane complex is composed of EccB1, EccCa1, EccCb1, EccD1 and EccE1.

It is found in the cell inner membrane. Functionally, an ATPase. Part of the ESX-1 / type VII specialized secretion system (T7SS), which exports several proteins including EsxA and EsxB. Plays a role in DNA conjugation, in both donor and recipient strains. This chain is ESX-1 secretion system ATPase EccB1, found in Mycolicibacterium smegmatis (strain MKD8) (Mycobacterium smegmatis).